A 224-amino-acid chain; its full sequence is E3 ubiquitin-protein ligase TRIM48 (224 aa).

An RING-type zinc finger spans residues 31–72 (CPICMNYFIDPVTIDCGHSFCRPCFYLNWQDIPILTQCFECI). A B box-type zinc finger spans residues 104–145 (SEEQMCGIHRETKKMFCEVDRSLLCLLCSSSQEHRYHRHCPA). Residues Cys109, His112, Cys131, and His137 each coordinate Zn(2+).

It belongs to the TRIM/RBCC family. In terms of assembly, interacts with PRMT1; the interaction leads to ubiquitination of PRMT1 by TRIM48. Interacts with MAP3K5. Interacts with STRAP.

Its subcellular location is the cytoplasm. It localises to the cytosol. The enzyme catalyses S-ubiquitinyl-[E2 ubiquitin-conjugating enzyme]-L-cysteine + [acceptor protein]-L-lysine = [E2 ubiquitin-conjugating enzyme]-L-cysteine + N(6)-ubiquitinyl-[acceptor protein]-L-lysine.. Its function is as follows. E3 ubiquitin-protein ligase which promotes K48-linked polyubiquitination of protein methyltransferase PRMT1, leading to PRMT1 degradation. This suppresses methylation of the PRMT1 substrate MAP3K5/ASK1, promoting its activation and increasing MAP3K5-dependent cell death induced by oxidative stress. TRIM48-mediated ubiquitination of PRMT1 also suppresses methylation of FOXO1 by PRMT1, leading to inhibition of FOXO1 transcriptional activity. The polypeptide is E3 ubiquitin-protein ligase TRIM48 (Homo sapiens (Human)).